An 823-amino-acid chain; its full sequence is Putative ankyrin repeat domain-containing protein 20A4 (823 aa).

ANK repeat units follow at residues 66–95 (QHRT…QIDV), 99–128 (ENRT…NPNL), 132–161 (YGNT…HIEA), 165–194 (DNNT…SSHA), and 198–227 (LRRS…DVFA). 2 disordered regions span residues 301–343 (VPEK…EVED) and 356–405 (QTLR…NICD). Over residues 371–384 (EQQRHERSEKKQPQ) the composition is skewed to basic and acidic residues. Coiled-coil stretches lie at residues 431–480 (KKLK…KQLE), 565–724 (EMIT…NNST), and 776–806 (FVLE…KTEV).

This is Putative ankyrin repeat domain-containing protein 20A4 from Homo sapiens (Human).